The chain runs to 412 residues: Phosphoglycerate kinase (412 aa).

Residues 26–28 (DFN), Arg42, 65–68 (HLGR), Arg133, and Arg166 each bind substrate. Residues Lys217, Gly308, Glu339, and 368 to 371 (GGDS) each bind ATP.

Belongs to the phosphoglycerate kinase family. As to quaternary structure, monomer.

Its subcellular location is the cytoplasm. It catalyses the reaction (2R)-3-phosphoglycerate + ATP = (2R)-3-phospho-glyceroyl phosphate + ADP. It participates in carbohydrate degradation; glycolysis; pyruvate from D-glyceraldehyde 3-phosphate: step 2/5. The protein is Phosphoglycerate kinase of Synechococcus sp. (strain JA-3-3Ab) (Cyanobacteria bacterium Yellowstone A-Prime).